Reading from the N-terminus, the 607-residue chain is Glutamine--fructose-6-phosphate aminotransferase [isomerizing] (607 aa).

The active-site Nucleophile; for GATase activity is the C2. One can recognise a Glutamine amidotransferase type-2 domain in the interval 2–217 (CGIIGIIGND…DGDWAVLTRN (216 aa)). 2 SIS domains span residues 283–422 (IGID…ARGA) and 455–597 (VCHD…VDQP). Residue K602 is the For Fru-6P isomerization activity of the active site.

Homodimer.

It is found in the cytoplasm. The enzyme catalyses D-fructose 6-phosphate + L-glutamine = D-glucosamine 6-phosphate + L-glutamate. Its function is as follows. Catalyzes the first step in hexosamine metabolism, converting fructose-6P into glucosamine-6P using glutamine as a nitrogen source. In Brucella abortus biovar 1 (strain 9-941), this protein is Glutamine--fructose-6-phosphate aminotransferase [isomerizing].